We begin with the raw amino-acid sequence, 100 residues long: Aspartyl/glutamyl-tRNA(Asn/Gln) amidotransferase subunit C (100 aa).

The protein belongs to the GatC family. As to quaternary structure, heterotrimer of A, B and C subunits.

The enzyme catalyses L-glutamyl-tRNA(Gln) + L-glutamine + ATP + H2O = L-glutaminyl-tRNA(Gln) + L-glutamate + ADP + phosphate + H(+). It catalyses the reaction L-aspartyl-tRNA(Asn) + L-glutamine + ATP + H2O = L-asparaginyl-tRNA(Asn) + L-glutamate + ADP + phosphate + 2 H(+). Allows the formation of correctly charged Asn-tRNA(Asn) or Gln-tRNA(Gln) through the transamidation of misacylated Asp-tRNA(Asn) or Glu-tRNA(Gln) in organisms which lack either or both of asparaginyl-tRNA or glutaminyl-tRNA synthetases. The reaction takes place in the presence of glutamine and ATP through an activated phospho-Asp-tRNA(Asn) or phospho-Glu-tRNA(Gln). This chain is Aspartyl/glutamyl-tRNA(Asn/Gln) amidotransferase subunit C, found in Rickettsia bellii (strain RML369-C).